A 406-amino-acid chain; its full sequence is Argininosuccinate synthase (406 aa).

Residues 12–20 (AYSGGLDTS) and Ala-39 each bind ATP. Tyr-90 and Ser-95 together coordinate L-citrulline. Position 120 (Gly-120) interacts with ATP. L-aspartate-binding residues include Thr-122, Asn-126, and Asp-127. Asn-126 contacts L-citrulline. L-citrulline-binding residues include Arg-130, Ser-179, Ser-188, Glu-264, and Tyr-276.

This sequence belongs to the argininosuccinate synthase family. Type 1 subfamily. Homotetramer.

The protein resides in the cytoplasm. The enzyme catalyses L-citrulline + L-aspartate + ATP = 2-(N(omega)-L-arginino)succinate + AMP + diphosphate + H(+). Its pathway is amino-acid biosynthesis; L-arginine biosynthesis; L-arginine from L-ornithine and carbamoyl phosphate: step 2/3. This chain is Argininosuccinate synthase, found in Geotalea uraniireducens (strain Rf4) (Geobacter uraniireducens).